Here is a 502-residue protein sequence, read N- to C-terminus: Ribose import ATP-binding protein RbsA (502 aa).

ABC transporter domains follow at residues 6–242 (IDMT…IARD) and 253–496 (ALGA…SGAR). 38–45 (GQNGAGKS) is a binding site for ATP.

Belongs to the ABC transporter superfamily. Ribose importer (TC 3.A.1.2.1) family. The complex is composed of an ATP-binding protein (RbsA), two transmembrane proteins (RbsC) and a solute-binding protein (RbsB).

The protein localises to the cell inner membrane. The enzyme catalyses D-ribose(out) + ATP + H2O = D-ribose(in) + ADP + phosphate + H(+). Functionally, part of the ABC transporter complex RbsABC involved in ribose import. Responsible for energy coupling to the transport system. This chain is Ribose import ATP-binding protein RbsA, found in Cereibacter sphaeroides (strain ATCC 17023 / DSM 158 / JCM 6121 / CCUG 31486 / LMG 2827 / NBRC 12203 / NCIMB 8253 / ATH 2.4.1.) (Rhodobacter sphaeroides).